The sequence spans 538 residues: NAD(P)H-quinone oxidoreductase chain 4 (538 aa).

14 helical membrane passes run 11 to 31, 43 to 63, 95 to 115, 119 to 139, 143 to 163, 175 to 195, 217 to 237, 251 to 271, 285 to 305, 314 to 334, 340 to 360, 382 to 404, 425 to 445, and 472 to 492; these read FPWLSLSIFFPIVGALIVPFI, YALIIALITFLITVAAYFKGF, MPLILLTSFITSLAVLAAWPV, PKLFFFLILAMDGGQIAVFAV, LLFFLAWELELFPVYLFLAIW, FIIYTAGSSLFILLAGLAMGF, GFQLLCYSGLLIAFGVKLPIV, TAPVHMLLAGILLKMGGYALL, FAPLLIVLGVVNIIYAALTSF, IAYSSISHMGFVLIGIGSFSS, AMLQMVSHGLIGASLFFLVGA, IMFALWTACAFASLALPGMSGFI, IVVASLAAIGVILTPIYLLSM, and IYIIACLLVPIIGIGLYPKIM.

This sequence belongs to the complex I subunit 4 family.

Its subcellular location is the cellular thylakoid membrane. It catalyses the reaction a plastoquinone + NADH + (n+1) H(+)(in) = a plastoquinol + NAD(+) + n H(+)(out). The catalysed reaction is a plastoquinone + NADPH + (n+1) H(+)(in) = a plastoquinol + NADP(+) + n H(+)(out). In terms of biological role, NDH-1 shuttles electrons from NAD(P)H, via FMN and iron-sulfur (Fe-S) centers, to quinones in the respiratory chain. The immediate electron acceptor for the enzyme in this species is believed to be plastoquinone. Couples the redox reaction to proton translocation (for every two electrons transferred, four hydrogen ions are translocated across the cytoplasmic membrane), and thus conserves the redox energy in a proton gradient. This is NAD(P)H-quinone oxidoreductase chain 4 from Prochlorococcus marinus (strain NATL2A).